Here is a 737-residue protein sequence, read N- to C-terminus: Catalase-peroxidase 2 (737 aa).

The segment at Met-1–Gly-33 is disordered. Residues Trp-107 to Tyr-235 constitute a cross-link (tryptophyl-tyrosyl-methioninium (Trp-Tyr) (with M-261)). His-108 acts as the Proton acceptor in catalysis. The segment at residues Tyr-235–Met-261 is a cross-link (tryptophyl-tyrosyl-methioninium (Tyr-Met) (with W-107)). Heme is bound at residue His-276.

It belongs to the peroxidase family. Peroxidase/catalase subfamily. In terms of assembly, homodimer or homotetramer. The cofactor is heme b. Formation of the three residue Trp-Tyr-Met cross-link is important for the catalase, but not the peroxidase activity of the enzyme.

The enzyme catalyses H2O2 + AH2 = A + 2 H2O. It catalyses the reaction 2 H2O2 = O2 + 2 H2O. In terms of biological role, bifunctional enzyme with both catalase and broad-spectrum peroxidase activity. The polypeptide is Catalase-peroxidase 2 (Mycolicibacterium vanbaalenii (strain DSM 7251 / JCM 13017 / BCRC 16820 / KCTC 9966 / NRRL B-24157 / PYR-1) (Mycobacterium vanbaalenii)).